The primary structure comprises 283 residues: 1-deoxypentalenic acid 11-beta-hydroxylase (283 aa).

Arg-117 contributes to the substrate binding site. Positions 135 and 137 each coordinate Fe cation. 2-oxoglutarate is bound by residues 135–137 (HQD) and Trp-151. Arg-186 is a substrate binding site. Position 224 (His-224) interacts with Fe cation. Residues Ser-226 and Arg-238 each coordinate 2-oxoglutarate. Positions 251–283 (HRGFNALTPWPESAKDASKGIMSKITGTPTTAE) are disordered.

Belongs to the PhyH family. Fe cation serves as cofactor. L-ascorbate is required as a cofactor.

The enzyme catalyses 1-deoxypentalenate + 2-oxoglutarate + O2 = 1-deoxy-11beta-hydroxypentalenate + succinate + CO2. Its pathway is antibiotic biosynthesis; pentalenolactone biosynthesis. In terms of biological role, catalyzes the conversion of 1-deoxypentalenic acid to 11-beta-hydroxy-1-deoxypentalenic acid in the biosynthesis of pentalenolactone antibiotic. This chain is 1-deoxypentalenic acid 11-beta-hydroxylase (pntH), found in Streptomyces arenae.